Consider the following 210-residue polypeptide: 2,3-bisphosphoglycerate-dependent phosphoglycerate mutase (210 aa).

Substrate-binding positions include 9–16, 22–23, arginine 61, 88–91, lysine 99, 115–116, and 159–160; these read RHGQSEWN, TG, ERDY, RR, and GN. The Tele-phosphohistidine intermediate role is filled by histidine 10. The active-site Proton donor/acceptor is the glutamate 88.

The protein belongs to the phosphoglycerate mutase family. BPG-dependent PGAM subfamily. Homodimer.

The enzyme catalyses (2R)-2-phosphoglycerate = (2R)-3-phosphoglycerate. The protein operates within carbohydrate degradation; glycolysis; pyruvate from D-glyceraldehyde 3-phosphate: step 3/5. Its function is as follows. Catalyzes the interconversion of 2-phosphoglycerate and 3-phosphoglycerate. The sequence is that of 2,3-bisphosphoglycerate-dependent phosphoglycerate mutase from Parvibaculum lavamentivorans (strain DS-1 / DSM 13023 / NCIMB 13966).